Reading from the N-terminus, the 1229-residue chain is Receptor-type adenylate cyclase GRESAG 4.3 (1229 aa).

The Cytoplasmic portion of the chain corresponds to 1 to 24 (MIARVCRLTKHSKPPHLPITLTTP). Residues 25-45 (TLFLVVLVLLQLHPICVLVNV) traverse the membrane as a helical segment. Residues 46–845 (DDGGGVTVKA…PNGNALTPAQ (800 aa)) lie on the Extracellular side of the membrane. Residues N77, N84, N626, N693, and N768 are each glycosylated (N-linked (GlcNAc...) asparagine). A helical transmembrane segment spans residues 846-866 (LAGVVGGSLFVVALAICLSVL). Over 867–1229 (ACFTLRGTRD…SNDLSDMIRV (363 aa)) the chain is Cytoplasmic. A Guanylate cyclase domain is found at 889–1043 (TLIFTDIESS…RTSNMAARTE (155 aa)). Mg(2+)-binding residues include D894 and D937.

The protein belongs to the adenylyl cyclase class-3 family. Mg(2+) is required as a cofactor.

It is found in the membrane. The enzyme catalyses ATP = 3',5'-cyclic AMP + diphosphate. In terms of biological role, could act as a receptor for an unknown ligand. The chain is Receptor-type adenylate cyclase GRESAG 4.3 (GRESAG 4.3) from Trypanosoma brucei brucei.